A 330-amino-acid polypeptide reads, in one-letter code: Fructose-1,6-bisphosphatase class 1 (330 aa).

The Mg(2+) site is built by Glu-84, Asp-103, Leu-105, and Asp-106. Residues 106-109, Asn-196, and Lys-262 each bind substrate; that span reads DGSS. Glu-268 is a Mg(2+) binding site.

The protein belongs to the FBPase class 1 family. As to quaternary structure, homotetramer. It depends on Mg(2+) as a cofactor.

The protein resides in the cytoplasm. The enzyme catalyses beta-D-fructose 1,6-bisphosphate + H2O = beta-D-fructose 6-phosphate + phosphate. Its pathway is carbohydrate biosynthesis; gluconeogenesis. The chain is Fructose-1,6-bisphosphatase class 1 from Shewanella sp. (strain W3-18-1).